A 417-amino-acid polypeptide reads, in one-letter code: NADH-quinone oxidoreductase subunit D (417 aa).

It belongs to the complex I 49 kDa subunit family. NDH-1 is composed of 14 different subunits. Subunits NuoB, C, D, E, F, and G constitute the peripheral sector of the complex.

It is found in the cell inner membrane. It catalyses the reaction a quinone + NADH + 5 H(+)(in) = a quinol + NAD(+) + 4 H(+)(out). Its function is as follows. NDH-1 shuttles electrons from NADH, via FMN and iron-sulfur (Fe-S) centers, to quinones in the respiratory chain. The immediate electron acceptor for the enzyme in this species is believed to be ubiquinone. Couples the redox reaction to proton translocation (for every two electrons transferred, four hydrogen ions are translocated across the cytoplasmic membrane), and thus conserves the redox energy in a proton gradient. The sequence is that of NADH-quinone oxidoreductase subunit D from Coxiella burnetii (strain RSA 331 / Henzerling II).